The sequence spans 396 residues: Peroxisome proliferator-activated receptor delta (396 aa).

The tract at residues 1–24 is disordered; sequence MKEEIPPRSPILDEQPSTPLEHQE. Polar residues predominate over residues 15–24; the sequence is QPSTPLEHQE. Residues 28 to 102 constitute a DNA-binding region (nuclear receptor); sequence SVDCKICGDR…LGMSHNAIRF (75 aa). 2 NR C4-type zinc fingers span residues 31–51 and 68–90; these read CKICGDRASGFHYGVHACEGC and CDRNCKIQKKNRNKCQYCRFNKC. An NR LBD domain is found at 166–394; sequence FVIHDMDTLW…HPLLQEIYRD (229 aa).

This sequence belongs to the nuclear hormone receptor family. NR1 subfamily. Heterodimer with the retinoid X receptor. In terms of processing, 'Lys-48'-linked polyubiquitinated; leading to proteasomal degradation. Deubiquitinated and stabilized by OTUD3. Ubiquitous.

Its subcellular location is the nucleus. Ligand-activated transcription factor key mediator of energy metabolism in adipose tissues. Receptor that binds peroxisome proliferators such as hypolipidemic drugs and fatty acids. Has a preference for poly-unsaturated fatty acids, such as gamma-linoleic acid and eicosapentanoic acid. Once activated by a ligand, the receptor binds to promoter elements of target genes. Regulates the peroxisomal beta-oxidation pathway of fatty acids. Functions as a transcription activator for the acyl-CoA oxidase gene. Decreases expression of NPC1L1 once activated by a ligand. This is Peroxisome proliferator-activated receptor delta (ppard) from Xenopus laevis (African clawed frog).